The sequence spans 446 residues: ATP-dependent protease ATPase subunit HslU (446 aa).

ATP contacts are provided by residues Val18, 60-65, Asp259, Glu324, and Arg396; that span reads GVGKTE.

This sequence belongs to the ClpX chaperone family. HslU subfamily. In terms of assembly, a double ring-shaped homohexamer of HslV is capped on each side by a ring-shaped HslU homohexamer. The assembly of the HslU/HslV complex is dependent on binding of ATP.

It localises to the cytoplasm. Functionally, ATPase subunit of a proteasome-like degradation complex; this subunit has chaperone activity. The binding of ATP and its subsequent hydrolysis by HslU are essential for unfolding of protein substrates subsequently hydrolyzed by HslV. HslU recognizes the N-terminal part of its protein substrates and unfolds these before they are guided to HslV for hydrolysis. The chain is ATP-dependent protease ATPase subunit HslU from Dechloromonas aromatica (strain RCB).